Consider the following 491-residue polypeptide: F-box/LRR-repeat protein 7 (491 aa).

Positions M1–S79 are disordered. The span at S16–S26 shows a compositional bias: low complexity. The segment covering T27–S55 has biased composition (polar residues). The 47-residue stretch at Q111 to I157 folds into the F-box domain. 10 LRR repeats span residues C185–C210, C211–L236, C237–I262, Q271–H296, C297–Y322, C323–L348, E349–Y374, C375–N400, C401–N426, and C427–N452.

This sequence belongs to the FBXL7 family. As to quaternary structure, part of the SCF (SKP1-CUL1-F-box) E3 ubiquitin-protein ligase complex SCF(FBXL7) composed of CUL1, SKP1, RBX1 and FBXL7. Interacts with AURKA; interaction takes place during mitosis but not in interphase. Interacts with BIRC5; this interaction allows BIRC5 to be polyubiquitinated by the SCF(FBXL7) E3 ubiquitin-protein ligase complex.

It localises to the cytoplasm. The protein localises to the cytoskeleton. Its subcellular location is the microtubule organizing center. It is found in the centrosome. Its pathway is protein modification; protein ubiquitination. Its function is as follows. Substrate recognition component of a SCF (SKP1-CUL1-F-box protein) E3 ubiquitin-protein ligase complex. During mitosis, it mediates the ubiquitination and subsequent proteasomal degradation of AURKA, causing mitotic arrest. It also regulates mitochondrial function by mediating the ubiquitination and proteasomal degradation of the apoptosis inhibitor BIRC5. The protein is F-box/LRR-repeat protein 7 (Fbxl7) of Mus musculus (Mouse).